A 583-amino-acid polypeptide reads, in one-letter code: ATP-dependent lipid A-core flippase (583 aa).

The next 5 helical transmembrane spans lie at Leu27–Leu47, Leu69–Leu89, Ala142–Tyr162, Trp165–Val185, and Ala249–Leu269. Residues Ala28–Arg310 form the ABC transmembrane type-1 domain. Positions Val342–Ile578 constitute an ABC transporter domain. Gly376–Ser383 serves as a coordination point for ATP.

It belongs to the ABC transporter superfamily. Lipid exporter (TC 3.A.1.106) family. Homodimer.

The protein localises to the cell inner membrane. The enzyme catalyses ATP + H2O + lipid A-core oligosaccharideSide 1 = ADP + phosphate + lipid A-core oligosaccharideSide 2.. Involved in lipopolysaccharide (LPS) biosynthesis. Translocates lipid A-core from the inner to the outer leaflet of the inner membrane. Transmembrane domains (TMD) form a pore in the inner membrane and the ATP-binding domain (NBD) is responsible for energy generation. This chain is ATP-dependent lipid A-core flippase, found in Vibrio vulnificus (strain CMCP6).